Consider the following 267-residue polypeptide: L-aspartate dehydrogenase 2 (267 aa).

Positions 123 and 189 each coordinate NAD(+). Residue His219 is part of the active site.

Belongs to the L-aspartate dehydrogenase family.

The enzyme catalyses L-aspartate + NADP(+) + H2O = oxaloacetate + NH4(+) + NADPH + H(+). It carries out the reaction L-aspartate + NAD(+) + H2O = oxaloacetate + NH4(+) + NADH + H(+). It participates in cofactor biosynthesis; NAD(+) biosynthesis; iminoaspartate from L-aspartate (dehydrogenase route): step 1/1. Functionally, specifically catalyzes the NAD or NADP-dependent dehydrogenation of L-aspartate to iminoaspartate. In Bordetella pertussis (strain Tohama I / ATCC BAA-589 / NCTC 13251), this protein is L-aspartate dehydrogenase 2.